A 1683-amino-acid chain; its full sequence is E3 ubiquitin-protein ligase SHPRH (1683 aa).

The segment at 1–43 (MSSRRKRAPPVRVDEEKRQQLHWNMHEDRRNEPIIISDDDEQP) is disordered. The span at 12–32 (RVDEEKRQQLHWNMHEDRRNE) shows a compositional bias: basic and acidic residues. Serine 266 carries the phosphoserine modification. A Helicase ATP-binding; first part domain is found at 307–389 (YQREAVNWML…TVEVLALILT (83 aa)). 373–380 (DEMGLGKT) is an ATP binding site. Positions 438–512 (QCPPTRVMIL…GFSGTFTLGK (75 aa)) constitute an H15 domain. A disordered region spans residues 525-607 (KQAVGSPRKI…QGHCPATSDS (83 aa)). Over residues 534-547 (IQKETRKSGNKDTD) the composition is skewed to basic and acidic residues. The span at 568–588 (KSRRNRSKLRKKLVPSTKKGK) shows a compositional bias: basic residues. Position 635 is a phosphoserine (serine 635). Residues 658–709 (RFECICGELDQIDRKPRVQCLKCHLWQHAKCVNYDEKNLKIKPFYCPHCLVA) form a PHD-type zinc finger. One can recognise a Helicase ATP-binding; second part domain in the interval 710–868 (MEPVSTRATL…FGLVVFLGIE (159 aa)). Positions 819–822 (DEAQ) match the DEAQ box motif. The segment at 1432-1479 (CPICARQLGKQWAVLTCGHCFCNECISIIIEQYSVGSHRSSIKCAICR) adopts an RING-type zinc-finger fold. In terms of domain architecture, Helicase C-terminal spans 1514 to 1672 (AVVRTLMKIQ…ASVLTVADLA (159 aa)).

This sequence belongs to the SNF2/RAD54 helicase family. As to quaternary structure, homodimer. Interacts with HLTF, PCNA, UBE2N and RAD18. In terms of tissue distribution, broadly expressed.

It carries out the reaction S-ubiquitinyl-[E2 ubiquitin-conjugating enzyme]-L-cysteine + [acceptor protein]-L-lysine = [E2 ubiquitin-conjugating enzyme]-L-cysteine + N(6)-ubiquitinyl-[acceptor protein]-L-lysine.. It functions in the pathway protein modification; protein ubiquitination. In terms of biological role, E3 ubiquitin-protein ligase involved in DNA repair. Upon genotoxic stress, accepts ubiquitin from the UBE2N-UBE2V2 E2 complex and transfers it to 'Lys-164' of PCNA which had been monoubiquitinated by UBE2A/B-RAD18, promoting the formation of non-canonical poly-ubiquitin chains linked through 'Lys-63'. This chain is E3 ubiquitin-protein ligase SHPRH (SHPRH), found in Homo sapiens (Human).